We begin with the raw amino-acid sequence, 110 residues long: Co-chaperonin GroES (110 aa).

The protein belongs to the GroES chaperonin family. Heptamer of 7 subunits arranged in a ring. Interacts with the chaperonin GroEL.

It is found in the cytoplasm. Together with the chaperonin GroEL, plays an essential role in assisting protein folding. The GroEL-GroES system forms a nano-cage that allows encapsulation of the non-native substrate proteins and provides a physical environment optimized to promote and accelerate protein folding. GroES binds to the apical surface of the GroEL ring, thereby capping the opening of the GroEL channel. In Mycoplasma genitalium (strain ATCC 33530 / DSM 19775 / NCTC 10195 / G37) (Mycoplasmoides genitalium), this protein is Co-chaperonin GroES.